The following is a 758-amino-acid chain: Actin filament-associated protein 1-like 1 (758 aa).

The tract at residues 91-194 (YRDSSENLSC…YESYDEEDEE (104 aa)) is disordered. The span at 102-120 (LPPPPSAPPPPLPTTPPPE) shows a compositional bias: pro residues. Residues 137–148 (YITSRNSSSPPN) are compositionally biased toward polar residues. The segment covering 177–186 (ESDGLSSSYE) has biased composition (low complexity). In terms of domain architecture, PH 1 spans 216–312 (DSRICAFLLR…WLRVIKEVIS (97 aa)). Positions 335–369 (SHDKTSDSDSAANGENSSLSSGKENRDTGKCRKGG) are disordered. The segment covering 342 to 356 (SDSAANGENSSLSSG) has biased composition (polar residues). In terms of domain architecture, PH 2 spans 409 to 503 (EVPCCGYLSV…WLGLLLAQTG (95 aa)). A coiled-coil region spans residues 602-690 (KTRAEEDARK…TEVKENLKKS (89 aa)). A disordered region spans residues 692 to 758 (AGGPTLGLAV…KAKEWEKKKP (67 aa)). The span at 749 to 758 (KAKEWEKKKP) shows a compositional bias: basic and acidic residues.

It localises to the cytoplasm. It is found in the cell projection. The protein resides in the podosome. The protein localises to the invadopodium. Its subcellular location is the cytoskeleton. It localises to the stress fiber. Its function is as follows. May be involved in podosome and invadosome formation. The sequence is that of Actin filament-associated protein 1-like 1 (afap1l1) from Xenopus tropicalis (Western clawed frog).